Here is a 258-residue protein sequence, read N- to C-terminus: L-fucose dehydrogenase (258 aa).

NADP(+) is bound by residues serine 17, isoleucine 19, arginine 39, histidine 40, glutamate 63, leucine 64, and asparagine 90. Asparagine 94, serine 140, lysine 141, glutamine 147, and tyrosine 153 together coordinate beta-L-fucose. NADP(+)-binding residues include tyrosine 153 and lysine 157. The active-site Proton acceptor is the tyrosine 153. Residues alanine 184 and glutamate 185 each coordinate beta-L-fucose. Positions 186 and 188 each coordinate NADP(+).

This sequence belongs to the short-chain dehydrogenases/reductases (SDR) family. As to quaternary structure, homotetramer; dimer of dimers.

The catalysed reaction is beta-L-fucose + NADP(+) = L-fucono-1,5-lactone + NADPH + H(+). The enzyme catalyses D-arabinose + NADP(+) = D-arabinono-1,5-lactone + NADPH + H(+). The protein operates within carbohydrate degradation; L-fucose degradation. In terms of biological role, L-fucose dehydrogenase involved in an L-fucose degradation pathway. Catalyzes the oxidation of L-fucose to L-fucono-1,5-lactone. Can also act on D-arabinose, with lower catalytic efficiency, and has weak activity with L-galactose and 4-deoxy-L-fucose. Shows a preference for NADP(+) over NAD(+). The chain is L-fucose dehydrogenase from Burkholderia multivorans (strain ATCC 17616 / 249).